A 421-amino-acid polypeptide reads, in one-letter code: Gamma-glutamyl phosphate reductase (421 aa).

The protein belongs to the gamma-glutamyl phosphate reductase family.

The protein localises to the cytoplasm. The catalysed reaction is L-glutamate 5-semialdehyde + phosphate + NADP(+) = L-glutamyl 5-phosphate + NADPH + H(+). The protein operates within amino-acid biosynthesis; L-proline biosynthesis; L-glutamate 5-semialdehyde from L-glutamate: step 2/2. Catalyzes the NADPH-dependent reduction of L-glutamate 5-phosphate into L-glutamate 5-semialdehyde and phosphate. The product spontaneously undergoes cyclization to form 1-pyrroline-5-carboxylate. The chain is Gamma-glutamyl phosphate reductase from Bordetella petrii (strain ATCC BAA-461 / DSM 12804 / CCUG 43448).